Consider the following 406-residue polypeptide: Erythromycin esterase type I (406 aa).

This enzyme confers resistance to erythromycin through inactivation by hydrolyzing the lactone ring of the antibiotic. In Escherichia coli, this protein is Erythromycin esterase type I (ereA).